The following is a 303-amino-acid chain: Acidic endochitinase WIN6.2B (303 aa).

An N-terminal signal peptide occupies residues 1–21; it reads MSVWAFAFFSLFLSLSVRGSA. The Chitin-binding type-1 domain occupies 22–62; it reads EQCGQQAGDALCPGGLCCSSYGWCGTTADYCGDGCQSQCDG. Cystine bridges form between C24-C39, C33-C45, C38-C52, and C56-C60. Residues 82 to 303 form a chitinase region; the sequence is DGYLSDIIPE…YGLLGLKDTM (222 aa). The active-site Proton donor is E150. C253 and C286 are joined by a disulfide.

The protein belongs to the glycosyl hydrolase 19 family. Chitinase class I subfamily.

The catalysed reaction is Random endo-hydrolysis of N-acetyl-beta-D-glucosaminide (1-&gt;4)-beta-linkages in chitin and chitodextrins.. Its function is as follows. Defense against chitin-containing fungal pathogens. This Populus trichocarpa (Western balsam poplar) protein is Acidic endochitinase WIN6.2B.